The primary structure comprises 281 residues: CDAN1-interacting nuclease 1 (281 aa).

Threonine 114 carries the post-translational modification Phosphothreonine.

It localises to the nucleus. The protein localises to the cytoplasm. In terms of biological role, plays a role in erythroid cell differentiation. This chain is CDAN1-interacting nuclease 1, found in Homo sapiens (Human).